The chain runs to 101 residues: Ascorbate-specific PTS system EIIB component (101 aa).

In terms of domain architecture, PTS EIIB type-2 spans 3 to 96; it reads VRILAVCGNG…KLLEVIKEHF (94 aa). Residue Cys-9 is the Phosphocysteine intermediate of the active site. Cys-9 is modified (phosphocysteine).

It is found in the cytoplasm. The enzyme catalyses N(pros)-phospho-L-histidyl-[protein] + L-ascorbate(out) = L-ascorbate 6-phosphate(in) + L-histidyl-[protein]. The phosphoenolpyruvate-dependent sugar phosphotransferase system (sugar PTS), a major carbohydrate active transport system, catalyzes the phosphorylation of incoming sugar substrates concomitantly with their translocation across the cell membrane. The enzyme II UlaABC PTS system is involved in ascorbate transport. In Salmonella choleraesuis (strain SC-B67), this protein is Ascorbate-specific PTS system EIIB component (ulaB).